Consider the following 456-residue polypeptide: Keratin, type I cytoskeletal 12 (456 aa).

The segment covering 1-19 (MSLSVRTSALSRRSSSQNG) has biased composition (polar residues). The disordered stretch occupies residues 1-25 (MSLSVRTSALSRRSSSQNGVAGRPW). The segment at 1–114 (MSLSVRTSAL…GNDGGLLSGS (114 aa)) is head. Positions 115–150 (EKETMQNLNDRLASYLGKVRALEEANAELENKIREW) are coil 1A. Residues 115-402 (EKETMQNLND…RLLEGDTQGD (288 aa)) form the IF rod domain. Residues 154-171 (RRTGDSGSQSDYSKYYPL) are linker 1. The tract at residues 172–263 (IEDLKNKIIS…KNHEEELQSF (92 aa)) is coil 1B. The linker 12 stretch occupies residues 264–286 (QAGGPGEVNVEMDAAPGVDLTKS). The coil 2 stretch occupies residues 287–397 (GELRKEINSN…IETYRRLLEG (111 aa)). Residues 398 to 456 (DTQGDGFDESLSLTVSKPQAPSVDSSKDPNKTRKIKTVVQEIVNGEVVSSQVQELEEAM) are tail. The tract at residues 405–430 (DESLSLTVSKPQAPSVDSSKDPNKTR) is disordered. A compositionally biased stretch (polar residues) spans 408–421 (LSLTVSKPQAPSVD).

This sequence belongs to the intermediate filament family. Heterotetramer of two type I and two type II keratins. Keratin-3 associates with keratin-12.

Involved in corneal epithelium organization, integrity and corneal keratin expression. This is Keratin, type I cytoskeletal 12 from Rattus norvegicus (Rat).